Reading from the N-terminus, the 558-residue chain is Solute carrier family 22 member 6-A (558 aa).

Residues 1-15 (MSFAELLERTGGMGR) lie on the Cytoplasmic side of the membrane. A helical membrane pass occupies residues 16–36 (FQITQVALMCFPILLMASHNL). The Extracellular segment spans residues 37 to 140 (LQNFSAAIPD…LVCGHKNRRQ (104 aa)). A helical membrane pass occupies residues 141-161 (LAQSVYMGGVLVGAIILGGLS). The Cytoplasmic segment spans residues 162–167 (DRYGRR). Residues 168 to 188 (ALLIWSYFQMAVSGLCSAFSP) form a helical membrane-spanning segment. At 189-197 (NYLSYCIFR) the chain is on the extracellular side. The helical transmembrane segment at 198 to 218 (FLTGMALSGIGLNTTALIVEW) threads the bilayer. Residues 219-225 (VPTRVRT) lie on the Cytoplasmic side of the membrane. A helical membrane pass occupies residues 226-246 (ITGTLAGFSYTVGQLLLAGLA). The Extracellular portion of the chain corresponds to 247-253 (YAMRDWR). The chain crosses the membrane as a helical span at residues 254 to 274 (WLQLCVSLPFFIFFLYSWWFP). Topologically, residues 275-342 (ESARWLVLSG…DLIRTSTIRR (68 aa)) are cytoplasmic. Residues 343 to 363 (ISCALSLVWFSTSFAYYGLAM) traverse the membrane as a helical segment. Residues 364-369 (DLQNFN) lie on the Extracellular side of the membrane. A helical membrane pass occupies residues 370-390 (VSIYLIQVIFGAVDFPAKIFS). The Cytoplasmic segment spans residues 391-400 (TTAMIYVGRK). The chain crosses the membrane as a helical span at residues 401 to 421 (FTQLMSLILGGVVILANSFVP). The Extracellular portion of the chain corresponds to 422–428 (HEMQTVR). The helical transmembrane segment at 429 to 449 (TGMAVFGKGCLAASFSCVFLY) threads the bilayer. At 450-462 (TTELYPTVIRQSG) the chain is on the cytoplasmic side. Residues 463 to 483 (LGLCSTMARIGGIVAPLVKIL) form a helical membrane-spanning segment. Residues 484-488 (GEYYP) are Extracellular-facing. The helical transmembrane segment at 489 to 509 (FLPLVIYGGAPIISGLCVFFL) threads the bilayer. Topologically, residues 510 to 558 (PETVNKPLPDTIEEVEKRIKAPKKENEMNEIVSLKKKEGMKENPVNDVL) are cytoplasmic. A compositionally biased stretch (basic and acidic residues) spans 539-550 (EIVSLKKKEGMK). Positions 539–558 (EIVSLKKKEGMKENPVNDVL) are disordered.

This sequence belongs to the major facilitator (TC 2.A.1) superfamily. Organic cation transporter (TC 2.A.1.19) family. Glycosylated. Glycosylation is necessary for proper targeting of the transporter to the plasma membrane.

It is found in the cell membrane. It localises to the basolateral cell membrane. The protein localises to the basal cell membrane. Its function is as follows. Involved in the renal elimination of endogenous and exogenous organic anions. Mediates the sodium-independent uptake of p-aminohippurate (PAH), 2,3-dimercapto-1-propanesulfonic acid (DMPS), cidofovir, adefovir, 9-(2-phosphonylmethoxyethyl) guanine (PMEG), 9-(2-phosphonylmethoxyethyl) diaminopurine (PMEDAP), ochratoxin (OTA), acyclovir (ACV), 3'-azido-3-'deoxythymidine (AZT), cimetidine (CMD), 2,4-dichloro-phenoxyacetate (2,4-D), hippurate (HA), indoleacetate (IA), indoxyl sulfate (IS) and 3-carboxy-4-methyl-5-propyl-2-furanpropionate (CMPF) and edaravone sulfate. PAH uptake is inhibited by p-chloromercuribenzenesulphonate (PCMBS), diethyl pyrocarbonate (DEPC), indomethacin, sulindac, diclofenac, carprofen, okadaic acid, benzothiazolylcysteine (BTC), S-chlorotrifluoroethylcysteine (CTFC), cysteine S-conjugates S-dichlorovinylcysteine (DCVC), furosemide, steviol, phorbol 12-myristate 13-acetate (PMA), calcium ionophore A23187, benzylpenicillin, bumetamide, losartan, probenecid, phenol red, urate, glutarate and alpha-ketoglutarate. This chain is Solute carrier family 22 member 6-A (slc22a6-a), found in Xenopus laevis (African clawed frog).